The sequence spans 415 residues: NEDD8-specific protease 2 (415 aa).

The disordered stretch occupies residues 1–42 (MRSNSIFTKEIDSEAVKKSSNLRPPSTGSSNSNGSDTASPKK). Residues 26 to 38 (STGSSNSNGSDTA) show a composition bias toward low complexity. Phosphoserine is present on S35. Active-site residues include H171, D188, and C229. Residues 320-415 (AVTSDSAQPH…QHTQQSIEIH (96 aa)) are disordered. Composition is skewed to polar residues over residues 335–368 (MPSS…NSSP), 379–390 (TASTSVLPTSIL), and 405–415 (IQHTQQSIEIH). Residue S367 is modified to Phosphoserine.

Belongs to the peptidase C48 family.

Its subcellular location is the cytoplasm. The protein localises to the nucleus. In terms of biological role, protease that catalyzes two essential functions in the NEDD8 pathway: processing of full-length NEDD8 to its mature form and deconjugation of NEDD8 from targeted proteins such as the pcu1, pcu2 and pcu4 cullins and other proteins. Has a role in meiosis. The polypeptide is NEDD8-specific protease 2 (nep2) (Schizosaccharomyces pombe (strain 972 / ATCC 24843) (Fission yeast)).